The primary structure comprises 387 residues: 3-ketoacyl-CoA thiolase (387 aa).

The Acyl-thioester intermediate role is filled by cysteine 91. Residues histidine 343 and cysteine 373 each act as proton acceptor in the active site.

Belongs to the thiolase-like superfamily. Thiolase family. In terms of assembly, heterotetramer of two alpha chains (FadB) and two beta chains (FadA).

It localises to the cytoplasm. The enzyme catalyses an acyl-CoA + acetyl-CoA = a 3-oxoacyl-CoA + CoA. It functions in the pathway lipid metabolism; fatty acid beta-oxidation. Its function is as follows. Catalyzes the final step of fatty acid oxidation in which acetyl-CoA is released and the CoA ester of a fatty acid two carbons shorter is formed. This chain is 3-ketoacyl-CoA thiolase, found in Shigella flexneri serotype 5b (strain 8401).